A 123-amino-acid chain; its full sequence is uncharacterized protein (123 aa).

The next 3 helical transmembrane spans lie at 7–29 (VKHLIIAGFSAAILSFLISFDAV), 44–66 (FFIHSFLLIGLPLALFTDAVHRI), and 79–101 (LGLYATVVYVSWDSAVWLAAAMA).

It is found in the cell membrane. This is an uncharacterized protein from Bacillus subtilis (strain 168).